Consider the following 532-residue polypeptide: uncharacterized protein (532 aa).

Helical transmembrane passes span 13 to 33 (MSLL…QTLL), 53 to 73 (WLTT…AFLI), 80 to 100 (SLFL…GIAP), 111 to 131 (IQAV…LLIF), 142 to 162 (IFGL…GWII), 169 to 189 (IMFY…FFIF), 203 to 223 (LGAI…SEAG), 231 to 251 (IVLS…VQQL), 273 to 293 (VINI…PIYL), 306 to 326 (LLLL…GILF), 334 to 354 (LAII…QLTI), 361 to 381 (IMLI…PVMT), and 483 to 503 (INDA…LSIF).

This sequence belongs to the major facilitator superfamily. EmrB family.

Its subcellular location is the cell membrane. This is an uncharacterized protein from Bacillus subtilis (strain 168).